We begin with the raw amino-acid sequence, 328 residues long: MEQDNGTIQAPGLPPTTCVYREDFKRLLLTPVYSVVLVVGLPLNICVIAQICASRRTLTRSAVYTLNLALADLMYACSLPLLIYNYARGDHWPFGDLACRFVRFLFYANLHGSILFLTCISFQRYLGICHPLASWHKRGGRRAAWVVCGVVWLAVTAQCLPTAVFAATGIQRNRTVCYDLSPPILSTRYLPYGMALTVIGFLLPFIALLACYCRMARRLCRQDGPAGPVAQERRSKAARMAVVVAAVFAISFLPFHITKTAYLAVRSTPGVSCPVLETFAAAYKGTRPFASVNSVLDPILFYFTQQKFRRQPHDLLQRLTAKWQRQRV.

Residues 1–27 (MEQDNGTIQAPGLPPTTCVYREDFKRL) are Extracellular-facing. N-linked (GlcNAc...) asparagine glycosylation occurs at Asn5. Residues 28–48 (LLTPVYSVVLVVGLPLNICVI) traverse the membrane as a helical segment. Residues 49–62 (AQICASRRTLTRSA) are Cytoplasmic-facing. Residues 63–83 (VYTLNLALADLMYACSLPLLI) form a helical membrane-spanning segment. Over 84-101 (YNYARGDHWPFGDLACRF) the chain is Extracellular. The cysteines at positions 99 and 177 are disulfide-linked. A helical transmembrane segment spans residues 102–122 (VRFLFYANLHGSILFLTCISF). Over 123 to 144 (QRYLGICHPLASWHKRGGRRAA) the chain is Cytoplasmic. The chain crosses the membrane as a helical span at residues 145–165 (WVVCGVVWLAVTAQCLPTAVF). The Extracellular segment spans residues 166–194 (AATGIQRNRTVCYDLSPPILSTRYLPYGM). The N-linked (GlcNAc...) asparagine glycan is linked to Asn173. A helical transmembrane segment spans residues 195–215 (ALTVIGFLLPFIALLACYCRM). The Cytoplasmic portion of the chain corresponds to 216-236 (ARRLCRQDGPAGPVAQERRSK). The chain crosses the membrane as a helical span at residues 237-257 (AARMAVVVAAVFAISFLPFHI). Residues 258 to 280 (TKTAYLAVRSTPGVSCPVLETFA) are Extracellular-facing. A helical membrane pass occupies residues 281–303 (AAYKGTRPFASVNSVLDPILFYF). The Cytoplasmic segment spans residues 304-328 (TQQKFRRQPHDLLQRLTAKWQRQRV).

It belongs to the G-protein coupled receptor 1 family.

It localises to the cell membrane. Functionally, receptor for extracellular UTP &gt; ADP = 2-methylthio-ATP &gt; ADP-beta-S &gt; ATP = ATP-gamma-S. The activity of this receptor is mediated by G proteins which activate a phosphatidylinositol-calcium second messenger system. Functionally coupled to phospholipase C. The protein is P2Y purinoceptor 6 (P2ry6) of Mus musculus (Mouse).